Reading from the N-terminus, the 137-residue chain is Large ribosomal subunit protein uL16 (137 aa).

This sequence belongs to the universal ribosomal protein uL16 family. As to quaternary structure, part of the 50S ribosomal subunit.

In terms of biological role, binds 23S rRNA and is also seen to make contacts with the A and possibly P site tRNAs. This Methylorubrum extorquens (strain CM4 / NCIMB 13688) (Methylobacterium extorquens) protein is Large ribosomal subunit protein uL16.